The sequence spans 271 residues: MSVVGKRVVDELCRVVSSYLGQSGQSLDLERCIDGAPVYAKGGATAICTVRMQHGCVYHLEFVYKFWAHLLEEMHYPFSPCFVISNNGLSTTLKCFLCRPSDAVSQFGHVLPVESDVYLAKNTSVVLGQDDFTKFKASLVFSKNLGVYNSMVICRTYFTDYRQVLQFLVVTPKSHKRLKSLLETVYCLAAPVADSAAQGGAGFPTNGRDARACTSDVTAVYWAGQGGRTVRILGAFQWSLGRAVALVRRSWPWISAGIAFLCLGLVWMRPS.

Over M1–R249 the chain is Perinuclear space. A helical transmembrane segment spans residues S250–W267. Residues M268–S271 are Nuclear-facing.

It belongs to the herpesviridae NEC2 protein family. Forms a heterohexameric complex with NEC1. In terms of processing, phosphorylated.

Its subcellular location is the host nucleus inner membrane. Functionally, plays an essential role in virion nuclear egress, the first step of virion release from infected cell. Within the host nucleus, NEC1 interacts with the newly formed capsid through the vertexes and directs it to the inner nuclear membrane by associating with NEC2. Induces the budding of the capsid at the inner nuclear membrane as well as its envelopment into the perinuclear space. There, the NEC1/NEC2 complex promotes the fusion of the enveloped capsid with the outer nuclear membrane and the subsequent release of the viral capsid into the cytoplasm where it will reach the secondary budding sites in the host Golgi or trans-Golgi network. The polypeptide is Nuclear egress protein 2 (Homo sapiens (Human)).